Here is a 100-residue protein sequence, read N- to C-terminus: NADH-quinone oxidoreductase subunit K (100 aa).

3 helical membrane passes run 4 to 24 (LQHG…GLLI), 28 to 48 (LLFM…AFVV), and 60 to 80 (VMYI…LALL).

The protein belongs to the complex I subunit 4L family. As to quaternary structure, NDH-1 is composed of 13 different subunits. Subunits NuoA, H, J, K, L, M, N constitute the membrane sector of the complex.

Its subcellular location is the cell inner membrane. It catalyses the reaction a quinone + NADH + 5 H(+)(in) = a quinol + NAD(+) + 4 H(+)(out). In terms of biological role, NDH-1 shuttles electrons from NADH, via FMN and iron-sulfur (Fe-S) centers, to quinones in the respiratory chain. The immediate electron acceptor for the enzyme in this species is believed to be ubiquinone. Couples the redox reaction to proton translocation (for every two electrons transferred, four hydrogen ions are translocated across the cytoplasmic membrane), and thus conserves the redox energy in a proton gradient. This is NADH-quinone oxidoreductase subunit K from Pectobacterium carotovorum subsp. carotovorum (strain PC1).